The chain runs to 435 residues: Enolase (435 aa).

Residue Q163 coordinates (2R)-2-phosphoglycerate. The active-site Proton donor is the E205. Mg(2+) contacts are provided by D243, E292, and D319. K344, R373, S374, and K395 together coordinate (2R)-2-phosphoglycerate. K344 functions as the Proton acceptor in the catalytic mechanism.

It belongs to the enolase family. The cofactor is Mg(2+).

The protein resides in the cytoplasm. It localises to the secreted. It is found in the cell surface. The catalysed reaction is (2R)-2-phosphoglycerate = phosphoenolpyruvate + H2O. It participates in carbohydrate degradation; glycolysis; pyruvate from D-glyceraldehyde 3-phosphate: step 4/5. Its function is as follows. Catalyzes the reversible conversion of 2-phosphoglycerate (2-PG) into phosphoenolpyruvate (PEP). It is essential for the degradation of carbohydrates via glycolysis. This is Enolase from Streptococcus pyogenes serotype M12 (strain MGAS2096).